The sequence spans 1781 residues: Atrochrysone carboxylic acid synthase (1781 aa).

The tract at residues 15–253 (TRDLFRRLHV…KHVALPVYAG (239 aa)) is N-terminal acylcarrier protein transacylase domain (SAT). Residues 390–823 (QSKIAIVGMA…GGNTSVVVEE (434 aa)) enclose the Ketosynthase family 3 (KS3) domain. Active-site for beta-ketoacyl synthase activity residues include Cys-563, His-698, and His-741. Residues 925–1244 (FAFTGQGASH…SLGLLHCAGL (320 aa)) form a malonyl-CoA:ACP transacylase (MAT) domain region. The tract at residues 1312–1631 (TSTVQQIIEE…RVLLNRFFSA (320 aa)) is product template (PT) domain. The tract at residues 1316 to 1451 (QQIIEETFSD…ADIVYGLPTD (136 aa)) is N-terminal hotdog fold. The 311-residue stretch at 1316–1626 (QQIIEETFSD…FRRYPRVLLN (311 aa)) folds into the PKS/mFAS DH domain. The active-site Proton acceptor; for dehydratase activity is His-1348. The C-terminal hotdog fold stretch occupies residues 1478-1626 (IANRLSHNMA…FRRYPRVLLN (149 aa)). Asp-1537 serves as the catalytic Proton donor; for dehydratase activity. The tract at residues 1633–1653 (DSDTSKHTSATDVSPPKKVVQ) is disordered. One can recognise a Carrier domain in the interval 1703-1780 (VDSDSTASKA…DLKAWLMEYY (78 aa)). The residue at position 1740 (Ser-1740) is an O-(pantetheine 4'-phosphoryl)serine.

The catalysed reaction is holo-[ACP] + 8 malonyl-CoA + 8 H(+) = atrochrysone carboxyl-[ACP] + 8 CO2 + 8 CoA + 2 H2O. The protein operates within secondary metabolite biosynthesis. Functionally, atrochrysone carboxylic acid synthase; part of the gene cluster that mediates the biosynthesis of the dimeric xanthones cryptosporioptides. The pathway begins with the synthesis of atrochrysone thioester by the polyketide synthase dmx-nrPKS. The atrochrysone carboxyl ACP thioesterase dmxR1 then breaks the thioester bond and releases the atrochrysone carboxylic acid from dmx-nrPKS. Atrochrysone carboxylic acid is decarboxylated by the decarboxylase dmxR15, and oxidized by the anthrone oxygenase dmxR16 to yield emodin. Emodin is then reduced to emodin hydroquinone by the oxidoreductase dmxR7. A-ring reduction by the short chain dehydrogenase dmxR18, dehydration by the scytalone dehydratase-like protein dmxR17 and probable spontaneous re-oxidation, results in overall deoxygenation to chrysophanol. Baeyer-Villiger oxidation by the Baeyer-Villiger monooxygenase (BVMO) dmxR6 then yields monodictylactone in equilibrium with monodictyphenone. In the case of the cryptosporioptides biosynthesis, monodictylactone is reduced at C-12 to an alcohol (by the short chain dehydrogenases dmxR12 or dmxR8) and hydroxylated at C-5 by dmxR9, yielding the electron-rich aromatic which could eliminate H(2)O to form the ortho-quinonemethide, followed by tautomerisation to paraquinone and complete the formal reduction to produce the 10-methylgroup. Conjugate addition of C-4a-OH to the resulting paraquinone by the monooxygenase dmxR10 then gives cyclohexadienone, which is then reduced at C-5 by the short chain dehydrogenase dmxR3 to give the dihydroxanthone. The 6,7-epoxide in the cryptosporioptides could be introduced by the cytochrome P450 monooxygenase dmxL3. The highly reducing PKS dmxL2 manufactures butyrate, which is further carboxylated by dmxL1 to form ethylmalonate. It is not yet clear whether the carboxylation occurs while the butyrate is attached to the ACP of dmxL2, but this unusual fungal metabolite could then be esterified to O-5 by the O-acetyltransferase dmxR13. Finally, dimerization performed by dmxR5 gives the observed dimers cryptosporioptides A, B and C as the final products of the pathway. In Cryptosporiopsis sp. (strain 8999), this protein is Atrochrysone carboxylic acid synthase.